The sequence spans 237 residues: MRSRKLAGGVRSSARLRARSCSAASASAQDTHVTTSAQTACQTPSSHKATDRRTSKKFKYDKGHIVKSELQKHRSDSAATPSETPGTHEPLASAEDGASLLGKEAGGSTPQGTAGPLPGRCGTESDASPAETENEPLPPRHGAPVGGESNGGCPARDGAALDLEQGPGAPLLMDGSALLDDDSNQPMPVSRFFGNVELMQDLPPVSSSCPSMSRREFRKMHFRAKDDEEDDADGAET.

The segment at 1–187 (MRSRKLAGGV…LLDDDSNQPM (187 aa)) is disordered. Residues 11-28 (RSSARLRARSCSAASASA) show a composition bias toward low complexity. Residues 29–47 (QDTHVTTSAQTACQTPSSH) are compositionally biased toward polar residues. Residues 48–76 (KATDRRTSKKFKYDKGHIVKSELQKHRSD) are compositionally biased toward basic and acidic residues. Serine 183 carries the post-translational modification Phosphoserine.

The protein belongs to the UPF0688 family.

The protein localises to the nucleus. The sequence is that of UPF0688 protein C1orf174 homolog from Bos taurus (Bovine).